Consider the following 152-residue polypeptide: Large ribosomal subunit protein uL22 (152 aa).

The segment covering 124 to 143 (APTKAASKKAAPAKQTTPAA) has biased composition (low complexity). A disordered region spans residues 124–152 (APTKAASKKAAPAKQTTPAATESKTEGAE).

The protein belongs to the universal ribosomal protein uL22 family. In terms of assembly, part of the 50S ribosomal subunit.

This protein binds specifically to 23S rRNA; its binding is stimulated by other ribosomal proteins, e.g. L4, L17, and L20. It is important during the early stages of 50S assembly. It makes multiple contacts with different domains of the 23S rRNA in the assembled 50S subunit and ribosome. Functionally, the globular domain of the protein is located near the polypeptide exit tunnel on the outside of the subunit, while an extended beta-hairpin is found that lines the wall of the exit tunnel in the center of the 70S ribosome. In Salinispora arenicola (strain CNS-205), this protein is Large ribosomal subunit protein uL22.